The primary structure comprises 307 residues: UDP-N-acetylenolpyruvoylglucosamine reductase (307 aa).

In terms of domain architecture, FAD-binding PCMH-type spans 33–197; it reads TGGNADFYIT…LEAAFTLAPG (165 aa). Residue arginine 176 is part of the active site. The active-site Proton donor is serine 226. Residue glutamate 296 is part of the active site.

It belongs to the MurB family. FAD serves as cofactor.

Its subcellular location is the cytoplasm. The catalysed reaction is UDP-N-acetyl-alpha-D-muramate + NADP(+) = UDP-N-acetyl-3-O-(1-carboxyvinyl)-alpha-D-glucosamine + NADPH + H(+). It functions in the pathway cell wall biogenesis; peptidoglycan biosynthesis. Its function is as follows. Cell wall formation. This chain is UDP-N-acetylenolpyruvoylglucosamine reductase, found in Staphylococcus aureus (strain MRSA252).